Reading from the N-terminus, the 161-residue chain is Small ribosomal subunit protein uS9 (161 aa).

The protein belongs to the universal ribosomal protein uS9 family.

This Rickettsia felis (strain ATCC VR-1525 / URRWXCal2) (Rickettsia azadi) protein is Small ribosomal subunit protein uS9.